The sequence spans 141 residues: Cystatin-S (141 aa).

The signal sequence occupies residues 1-27 (MAYLLHAQLFLLTTFILVLNMRLCPVL). Positions 76 to 80 (QVVAG) match the Secondary area of contact motif. Cystine bridges form between C94–C104 and C118–C138.

This sequence belongs to the cystatin family. As to expression, found in saliva, tears, urine and seminal fluid.

It is found in the secreted. In terms of biological role, this protein strongly inhibits papain and ficin, partially inhibits stem bromelain and bovine cathepsin C, but does not inhibit porcine cathepsin B or clostripain. Papain is inhibited non-competitively. The sequence is that of Cystatin-S (Cst4) from Rattus norvegicus (Rat).